A 62-amino-acid chain; its full sequence is Short neurotoxin 3 (62 aa).

4 disulfides stabilise this stretch: Cys3/Cys24, Cys17/Cys41, Cys43/Cys54, and Cys55/Cys60.

Belongs to the three-finger toxin family. Short-chain subfamily. Type I alpha-neurotoxin sub-subfamily. In terms of tissue distribution, expressed by the venom gland.

The protein localises to the secreted. Functionally, binds to muscle nicotinic acetylcholine receptor (nAChR) and inhibit acetylcholine from binding to the receptor, thereby impairing neuromuscular transmission. This chain is Short neurotoxin 3, found in Naja mossambica (Mozambique spitting cobra).